We begin with the raw amino-acid sequence, 227 residues long: Lipoprotein-releasing system ATP-binding protein LolD (227 aa).

One can recognise an ABC transporter domain in the interval 7–227 (LSCRNLGKSY…RLEGGRLVEA (221 aa)). Residue 43–50 (GTSGSGKS) coordinates ATP.

The protein belongs to the ABC transporter superfamily. Lipoprotein translocase (TC 3.A.1.125) family. As to quaternary structure, the complex is composed of two ATP-binding proteins (LolD) and two transmembrane proteins (LolC and LolE).

It is found in the cell inner membrane. Functionally, part of the ABC transporter complex LolCDE involved in the translocation of mature outer membrane-directed lipoproteins, from the inner membrane to the periplasmic chaperone, LolA. Responsible for the formation of the LolA-lipoprotein complex in an ATP-dependent manner. This is Lipoprotein-releasing system ATP-binding protein LolD from Pseudomonas syringae pv. tomato (strain ATCC BAA-871 / DC3000).